Reading from the N-terminus, the 87-residue chain is Small ribosomal subunit protein uS19 (87 aa).

It belongs to the universal ribosomal protein uS19 family.

Its function is as follows. Protein S19 forms a complex with S13 that binds strongly to the 16S ribosomal RNA. The sequence is that of Small ribosomal subunit protein uS19 from Mesoplasma florum (strain ATCC 33453 / NBRC 100688 / NCTC 11704 / L1) (Acholeplasma florum).